Here is a 140-residue protein sequence, read N- to C-terminus: Early nodulin-like protein 22 (140 aa).

Positions 1-28 (MAQSSGHVSYVAVTVPIAIVMTVLCLFL) are cleaved as a signal peptide. The region spanning 39–138 (TTYIVGGDDG…GLKMAIKALA (100 aa)) is the Phytocyanin domain. An N-linked (GlcNAc...) asparagine glycan is attached at Asn-85. A disulfide bond links Cys-92 and Cys-126.

It belongs to the early nodulin-like (ENODL) family.

May act as a carbohydrate transporter. This Arabidopsis thaliana (Mouse-ear cress) protein is Early nodulin-like protein 22.